A 336-amino-acid chain; its full sequence is Cytoskeleton protein RodZ (336 aa).

Topologically, residues 1–111 (MNTEATHDQN…LGKRRKKRDG (111 aa)) are cytoplasmic. Residues 19 to 71 (LRNAREQLGLSQQAVAERLCLKVSTVRDIEEDKAPADLASTFLRGYIRSYARL) form the HTH cro/C1-type domain. The segment at residues 30–49 (QQAVAERLCLKVSTVRDIEE) is a DNA-binding region (H-T-H motif). Residues 112-132 (WLMTFTWLVLFVVIGLSGAWW) traverse the membrane as a helical; Signal-anchor for type II membrane protein segment. Over 133–336 (WQDHKAQQEE…TLNAEQSPAQ (204 aa)) the chain is Periplasmic. Residues 148-164 (DQSSAELNNNQSQSVPL) show a composition bias toward polar residues. The interval 148–245 (DQSSAELNNN…PLPTDQAGVT (98 aa)) is disordered. A compositionally biased stretch (low complexity) spans 165 to 201 (DTSTTTDQAMATTPTSPVDTTATNTQTPAATTAPSPT). Residues 202–217 (VDSQQNAVVPPSQANV) are compositionally biased toward polar residues. Residues 218–240 (DTAATPAPAATTTPDGAAPLPTD) are compositionally biased toward low complexity.

Belongs to the RodZ family.

It localises to the cell inner membrane. Its function is as follows. Cytoskeletal protein that is involved in cell-shape control through regulation of the length of the long axis. In Escherichia coli O7:K1 (strain IAI39 / ExPEC), this protein is Cytoskeleton protein RodZ.